Here is a 375-residue protein sequence, read N- to C-terminus: Delta(9) fatty acid conjugase-like enzyme (375 aa).

2 consecutive transmembrane segments (helical) span residues 38 to 58 and 66 to 86; these read LSLS…LFYV and LPYS…GAFL. The short motif at 94 to 98 is the Histidine box-1 element; the sequence is HECGH. The short motif at 130–134 is the Histidine box-2 element; it reads HRNHH. 3 helical membrane-spanning segments follow: residues 168 to 188, 219 to 239, and 241 to 261; these read FGLV…YLIF, VFFS…IAIA, and GAML…AFIF. The Histidine box-3 signature appears at 307 to 311; the sequence is HVVHH.

This sequence belongs to the fatty acid desaturase type 1 family.

It localises to the membrane. Functionally, involved in the biosynthesis of dimorphecolic acid (9-OH-18:2(10E,12E)). Catalyzes the formation of the C-9 hydroxyl group and the (E)-delta(10) double bond from the trans-linoleic acid (16:2(9Z,12E)) produced by FAD2-1. Very limited activity with cis-linoleic acid (16:2(9Z,12Z)). The chain is Delta(9) fatty acid conjugase-like enzyme from Dimorphotheca sinuata (African daisy).